The sequence spans 295 residues: Xyloglucan endotransglucosylase/hydrolase (295 aa).

A signal peptide spans Met-1–Ala-23. The region spanning Pro-25–Tyr-222 is the GH16 domain. Glu-108 serves as the catalytic Nucleophile. Catalysis depends on Glu-112, which acts as the Proton donor. Glu-112 contributes to the xyloglucan binding site. An N-linked (GlcNAc...) asparagine glycan is attached at Asn-116. Xyloglucan is bound by residues Gln-125–Asn-127, Asn-135–Glu-137, Asp-201–Trp-202, and Gly-206. 2 disulfides stabilise this stretch: Cys-230-Cys-239 and Cys-276-Cys-289. Residue Arg-281 participates in xyloglucan binding.

The protein belongs to the glycosyl hydrolase 16 family. XTH group 1 subfamily. Contains at least one intrachain disulfide bond essential for its enzymatic activity. Post-translationally, the N-glycan consists of an (GlcNAc)2(Hex)6 oligosaccharide; not essential for its enzymatic activity.

The protein resides in the secreted. The protein localises to the cell wall. Its subcellular location is the extracellular space. It localises to the apoplast. The catalysed reaction is breaks a beta-(1-&gt;4) bond in the backbone of a xyloglucan and transfers the xyloglucanyl segment on to O-4 of the non-reducing terminal glucose residue of an acceptor, which can be a xyloglucan or an oligosaccharide of xyloglucan.. Catalyzes xyloglucan endohydrolysis (XEH) and/or endotransglycosylation (XET). Cleaves and religates xyloglucan polymers, an essential constituent of the primary cell wall, and thereby participates in cell wall construction of growing tissues. The sequence is that of Xyloglucan endotransglucosylase/hydrolase (XET16A) from Brassica oleracea var. botrytis (Cauliflower).